Reading from the N-terminus, the 114-residue chain is Protein S100-A9 (114 aa).

Position 2 is a blocked amino end (Thr) (Thr-2). At Cys-3 the chain carries S-nitrosocysteine; transient. EF-hand domains lie at 12–47 (IETI…DLQN) and 54–89 (KNEK…LTWA). Residue His-20 coordinates Zn(2+). The Ca(2+) site is built by Ser-23, Leu-26, and His-28. Asp-30 contacts Zn(2+). Thr-31, Glu-36, Asp-67, Asn-69, Asp-71, Gln-73, and Glu-78 together coordinate Ca(2+). 2 residues coordinate Zn(2+): His-91 and His-95. Positions 93-102 (KMHEGDEGPG) are enriched in basic and acidic residues. Residues 93–114 (KMHEGDEGPGHHHKPGLGEGTP) form a disordered region. His-105 is subject to Pros-methylhistidine. Phosphothreonine; by MAPK14 is present on Thr-113.

Homodimer. Preferentially exists as a heterodimer or heterotetramer with S100A8 known as calprotectin (S100A8/A9). S100A9 interacts with ATP2A2. S100A9 interacts with AGER, and with the heterodimeric complex formed by TLR4 and LY96 in the presence of calcium and/or zinc ions. S100A9 binds quinoline-3-carboxamides in the presence of calcium and/or zinc ions. S100A9 interacts with amyloid-beta protein 40. Calprotectin (S100A8/9) interacts with CEACAM3 and tubulin filaments in a calcium-dependent manner. Heterotetrameric calprotectin (S100A8/A9) interacts with ANXA6 and associates with tubulin filaments in activated monocytes. Calprotectin (S100A8/9) interacts with NCF2/P67PHOX, RAC1, RAC2, CYBA and CYBB. Calprotectin (S100A8/9) interacts with NOS2 to form the iNOS-S100A8/A9 transnitrosylase complex; induced by LDL(ox). Calprotectin (S100A8/9) interacts with CD69. In terms of processing, phosphorylated. Phosphorylation inhibits activation of tubulin polymerization. Post-translationally, S-nitrosylation of Cys-3 is implicated in LDL(ox)-induced S-nitrosylation of GAPDH at 'Cys-247' through a transnitrosylase mechanism involving a iNOS-S100A8/9 complex. Methylation at His-105 by METTL9 reduces zinc-binding without affecting heterodimerization with S100A8. As to expression, calprotectin (S100A8/9) is predominantly expressed in myeloid cells. Except for inflammatory conditions, the expression is restricted to a specific stage of myeloid differentiation since both proteins are expressed in circulating neutrophils and monocytes but are absent in normal tissue macrophages and lymphocytes. Under chronic inflammatory conditions, such as psoriasis and malignant disorders, also expressed in the epidermis. Found in high concentrations at local sites of inflammation or in the serum of patients with inflammatory diseases such as rheumatoid, cystic fibrosis, inflammatory bowel disease, Crohn's disease, giant cell arteritis, cystic fibrosis, Sjogren's syndrome, systemic lupus erythematosus, and progressive systemic sclerosis. Involved in the formation and deposition of amyloids in the aging prostate known as corpora amylacea inclusions. Strongly up-regulated in many tumors, including gastric, esophageal, colon, pancreatic, bladder, ovarian, thyroid, breast and skin cancers.

It localises to the secreted. The protein localises to the cytoplasm. Its subcellular location is the cytoskeleton. The protein resides in the cell membrane. Its function is as follows. S100A9 is a calcium- and zinc-binding protein which plays a prominent role in the regulation of inflammatory processes and immune response. It can induce neutrophil chemotaxis, adhesion, can increase the bactericidal activity of neutrophils by promoting phagocytosis via activation of SYK, PI3K/AKT, and ERK1/2 and can induce degranulation of neutrophils by a MAPK-dependent mechanism. Predominantly found as calprotectin (S100A8/A9) which has a wide plethora of intra- and extracellular functions. The intracellular functions include: facilitating leukocyte arachidonic acid trafficking and metabolism, modulation of the tubulin-dependent cytoskeleton during migration of phagocytes and activation of the neutrophilic NADPH-oxidase. Also participates in regulatory T-cell differentiation together with CD69. Activates NADPH-oxidase by facilitating the enzyme complex assembly at the cell membrane, transferring arachidonic acid, an essential cofactor, to the enzyme complex and S100A8 contributes to the enzyme assembly by directly binding to NCF2/P67PHOX. The extracellular functions involve pro-inflammatory, antimicrobial, oxidant-scavenging and apoptosis-inducing activities. Its pro-inflammatory activity includes recruitment of leukocytes, promotion of cytokine and chemokine production, and regulation of leukocyte adhesion and migration. Acts as an alarmin or a danger associated molecular pattern (DAMP) molecule and stimulates innate immune cells via binding to pattern recognition receptors such as Toll-like receptor 4 (TLR4) and receptor for advanced glycation endproducts (AGER). Binding to TLR4 and AGER activates the MAP-kinase and NF-kappa-B signaling pathways resulting in the amplification of the pro-inflammatory cascade. Has antimicrobial activity towards bacteria and fungi and exerts its antimicrobial activity probably via chelation of Zn(2+) which is essential for microbial growth. Can induce cell death via autophagy and apoptosis and this occurs through the cross-talk of mitochondria and lysosomes via reactive oxygen species (ROS) and the process involves BNIP3. Can regulate neutrophil number and apoptosis by an anti-apoptotic effect; regulates cell survival via ITGAM/ITGB and TLR4 and a signaling mechanism involving MEK-ERK. Its role as an oxidant scavenger has a protective role in preventing exaggerated tissue damage by scavenging oxidants. Can act as a potent amplifier of inflammation in autoimmunity as well as in cancer development and tumor spread. Has transnitrosylase activity; in oxidatively-modified low-densitity lipoprotein (LDL(ox))-induced S-nitrosylation of GAPDH on 'Cys-247' proposed to transfer the NO moiety from NOS2/iNOS to GAPDH via its own S-nitrosylated Cys-3. The iNOS-S100A8/A9 transnitrosylase complex is proposed to also direct selective inflammatory stimulus-dependent S-nitrosylation of multiple targets such as ANXA5, EZR, MSN and VIM by recognizing a [IL]-x-C-x-x-[DE] motif. This chain is Protein S100-A9, found in Homo sapiens (Human).